Consider the following 69-residue polypeptide: MKARELKELRTSNPQDLIKKLGDLKAELFNLRFQLATGQLENPMRIREVKKSIAQIKTIIREEELKIEQ.

This sequence belongs to the universal ribosomal protein uL29 family.

The protein is Large ribosomal subunit protein uL29 of Clostridium perfringens (strain ATCC 13124 / DSM 756 / JCM 1290 / NCIMB 6125 / NCTC 8237 / Type A).